Here is a 436-residue protein sequence, read N- to C-terminus: Xaa-Arg dipeptidase (436 aa).

Belongs to the peptidase M20A family.

It catalyses the reaction beta-alanyl-L-lysine + H2O = beta-alanine + L-lysine. The catalysed reaction is beta-alanyl-L-ornithine + H2O = beta-alanine + L-ornithine. It carries out the reaction N(2)-(4-aminobutanoyl)-L-lysine + H2O = 4-aminobutanoate + L-lysine. The enzyme catalyses N(2)-(4-aminobutanoyl)-L-ornithine + H2O = 4-aminobutanoate + L-ornithine. It catalyses the reaction N(2)-(4-aminobutanoyl)-L-arginine + H2O = 4-aminobutanoate + L-arginine. Functionally, catalyzes the peptide bond hydrolysis in dipeptides having basic amino acids lysine, ornithine or arginine at C-terminus. Postulated to function in a metabolite repair mechanism by eliminating alternate dipeptide by-products formed during carnosine synthesis. The chain is Xaa-Arg dipeptidase from Homo sapiens (Human).